The sequence spans 318 residues: tRNA dimethylallyltransferase (318 aa).

16 to 23 (GPTASGKT) contributes to the ATP binding site. A substrate-binding site is contributed by 18–23 (TASGKT). Interaction with substrate tRNA regions lie at residues 41–44 (DSAL), 165–169 (QRINR), 246–251 (RCVGYR), and 279–286 (KRQITWLR).

The protein belongs to the IPP transferase family. As to quaternary structure, monomer. Mg(2+) serves as cofactor.

The catalysed reaction is adenosine(37) in tRNA + dimethylallyl diphosphate = N(6)-dimethylallyladenosine(37) in tRNA + diphosphate. Its function is as follows. Catalyzes the transfer of a dimethylallyl group onto the adenine at position 37 in tRNAs that read codons beginning with uridine, leading to the formation of N6-(dimethylallyl)adenosine (i(6)A). This Actinobacillus succinogenes (strain ATCC 55618 / DSM 22257 / CCUG 43843 / 130Z) protein is tRNA dimethylallyltransferase.